Here is a 293-residue protein sequence, read N- to C-terminus: Acidic endochitinase (293 aa).

The signal sequence occupies residues 1–22 (MEKCFNIIPSLLLISLLIKSSN). The 270-residue stretch at 24-293 (AGIAVYWGQN…GYSNAIKGSV (270 aa)) folds into the GH18 domain. Disulfide bonds link C43-C90 and C73-C80. E150 serves as the catalytic Proton donor. Residues C179 and C208 are joined by a disulfide bond.

This sequence belongs to the glycosyl hydrolase 18 family. Chitinase class II subfamily.

Its subcellular location is the secreted. It is found in the extracellular space. It catalyses the reaction Random endo-hydrolysis of N-acetyl-beta-D-glucosaminide (1-&gt;4)-beta-linkages in chitin and chitodextrins.. This protein functions as a defense against chitin containing fungal pathogens. The sequence is that of Acidic endochitinase from Cicer arietinum (Chickpea).